The primary structure comprises 111 residues: uncharacterized protein (111 aa).

A run of 2 helical transmembrane segments spans residues 7–29 and 49–71; these read LYSS…RALY and PSLL…SINL.

The protein resides in the membrane. This is an uncharacterized protein from Saccharomyces cerevisiae (strain ATCC 204508 / S288c) (Baker's yeast).